The following is a 331-amino-acid chain: Putative lipoprotein YerB (331 aa).

An N-terminal signal peptide occupies residues 1 to 19; that stretch reads MKKWMTVCALCFVFFLLVS. Cysteine 20 is lipidated: N-palmitoyl cysteine. A lipid anchor (S-diacylglycerol cysteine) is attached at cysteine 20. Threonine 97 bears the Phosphothreonine mark. At serine 103 the chain carries Phosphoserine.

Interacts with PcrA. The interaction is not essential for cell viability or repair of UV-induced lesions.

Its subcellular location is the cell membrane. The sequence is that of Putative lipoprotein YerB (yerB) from Bacillus subtilis (strain 168).